The chain runs to 353 residues: Uroporphyrinogen decarboxylase (353 aa).

Substrate-binding positions include 26–30 (RQAGR), Asp76, Tyr153, Thr208, and His326.

Belongs to the uroporphyrinogen decarboxylase family. Homodimer.

Its subcellular location is the cytoplasm. The enzyme catalyses uroporphyrinogen III + 4 H(+) = coproporphyrinogen III + 4 CO2. It participates in porphyrin-containing compound metabolism; protoporphyrin-IX biosynthesis; coproporphyrinogen-III from 5-aminolevulinate: step 4/4. Functionally, catalyzes the decarboxylation of four acetate groups of uroporphyrinogen-III to yield coproporphyrinogen-III. The chain is Uroporphyrinogen decarboxylase from Chromohalobacter salexigens (strain ATCC BAA-138 / DSM 3043 / CIP 106854 / NCIMB 13768 / 1H11).